The sequence spans 345 residues: DNA primase small subunit PriS (345 aa).

Active-site residues include Asp-95 and Asp-97. Zn(2+) is bound by residues Cys-106, His-108, Cys-114, and Cys-117. Positions 106-117 (CNHEPGKVCPIC) match the Zinc knuckle motif motif. The active site involves Asp-280.

This sequence belongs to the eukaryotic-type primase small subunit family. In terms of assembly, heterodimer of a small subunit (PriS) and a large subunit (PriL). Mg(2+) serves as cofactor. It depends on Mn(2+) as a cofactor.

Its function is as follows. Catalytic subunit of DNA primase, an RNA polymerase that catalyzes the synthesis of short RNA molecules used as primers for DNA polymerase during DNA replication. The small subunit contains the primase catalytic core and has DNA synthesis activity on its own, synthesizing DNA strands up to 3 kB. Binding to the large subunit stabilizes and modulates the activity, increasing the rate of DNA synthesis while decreasing the length of the DNA fragments, and conferring RNA synthesis capability for RNA fragments up to 150 bases. The DNA polymerase activity may enable DNA primase to also catalyze primer extension after primer synthesis. May also play a role in DNA repair. Displays gap-filling and strand-displacement activities. The polypeptide is DNA primase small subunit PriS (Pyrococcus abyssi (strain GE5 / Orsay)).